Reading from the N-terminus, the 392-residue chain is Selenide, water dikinase 1 (392 aa).

Cys-31 is a catalytic residue. Residues Lys-32, 67–69, Asp-87, Asp-110, and 161–164 contribute to the ATP site; these read GMD and GGQT. Mg(2+) is bound at residue Asp-69. Mg(2+) is bound at residue Asp-110. Asp-265 contributes to the Mg(2+) binding site.

This sequence belongs to the selenophosphate synthase 1 family. Class II subfamily. As to quaternary structure, homodimer. Mg(2+) is required as a cofactor.

It is found in the cell membrane. The protein localises to the nucleus membrane. It catalyses the reaction hydrogenselenide + ATP + H2O = selenophosphate + AMP + phosphate + 2 H(+). In terms of biological role, synthesizes selenophosphate from selenide and ATP. The polypeptide is Selenide, water dikinase 1 (sephs1) (Xenopus laevis (African clawed frog)).